Reading from the N-terminus, the 822-residue chain is Putative endoplasmic reticulum metallopeptidase 1 (822 aa).

The Cytoplasmic portion of the chain corresponds to Met1–Asn14. A helical membrane pass occupies residues Thr15–Phe35. Residues His36 to Lys365 lie on the Lumenal side of the membrane. N-linked (GlcNAc...) asparagine glycosylation occurs at Asn146. Zn(2+)-binding residues include His161 and Asp173. Glu207 functions as the Proton acceptor in the catalytic mechanism. Zn(2+) is bound by residues Glu208 and Glu234. Asn291 is a glycosylation site (N-linked (GlcNAc...) asparagine). Zn(2+) is bound at residue His307. A helical membrane pass occupies residues Leu366–Leu384. Topologically, residues Arg385 to Thr392 are cytoplasmic. The helical transmembrane segment at Val393–Ala413 threads the bilayer. At Tyr414–Tyr431 the chain is on the lumenal side. A helical transmembrane segment spans residues Trp432–Phe452. Residues Lys453 to Thr463 are Cytoplasmic-facing. Residues Ile464–Ile484 traverse the membrane as a helical segment. Position 485 (Asp485) is a topological domain, lumenal. Residues Phe486–His506 form a helical membrane-spanning segment. At Pro507–Ser514 the chain is on the cytoplasmic side. Residues Ile515–Leu535 form a helical membrane-spanning segment. At Thr536–Asn547 the chain is on the lumenal side. The chain crosses the membrane as a helical span at residues Val548–Ile568. The Cytoplasmic segment spans residues Gln569–Cys575. Residues Cys576–Ala596 form a helical membrane-spanning segment. Residues Lys597–Glu822 lie on the Lumenal side of the membrane. N-linked (GlcNAc...) asparagine glycans are attached at residues Asn617, Asn682, Asn706, and Asn758.

Belongs to the peptidase M28 family. M28B subfamily. Requires Zn(2+) as cofactor.

It localises to the endoplasmic reticulum membrane. This Schizosaccharomyces pombe (strain 972 / ATCC 24843) (Fission yeast) protein is Putative endoplasmic reticulum metallopeptidase 1.